The chain runs to 46 residues: MGISPPCYGNWPTLDETVKNVFTCLNFVVVWRVIFNPQRQGSWISC.

This is an uncharacterized protein from Escherichia coli.